Here is a 1252-residue protein sequence, read N- to C-terminus: DNA-directed RNA polymerase subunit beta (1252 aa).

It belongs to the RNA polymerase beta chain family. As to quaternary structure, the RNAP catalytic core consists of 2 alpha, 1 beta, 1 beta' and 1 omega subunit. When a sigma factor is associated with the core the holoenzyme is formed, which can initiate transcription.

It catalyses the reaction RNA(n) + a ribonucleoside 5'-triphosphate = RNA(n+1) + diphosphate. Functionally, DNA-dependent RNA polymerase catalyzes the transcription of DNA into RNA using the four ribonucleoside triphosphates as substrates. This chain is DNA-directed RNA polymerase subunit beta, found in Chlamydia pneumoniae (Chlamydophila pneumoniae).